A 411-amino-acid polypeptide reads, in one-letter code: MEYAGKDAQLWAAIGREEQRQEGTIELIASENIVSKEVAAAQGSVLTNKYAEGYPGKRYYGGCQFIDQVEQLAIDHAKELFGAAYANVQPHSGSQANMAVYQALLKPGDTILGMGMDAGGHLTHGSKVNFSGKLYHTYGYELSPETEELDYDAILAQAKEIQPQLIVAGASAYSQIIDWDKFRQIADEVGAYLMVDMAHIAGLVATGYHPNPVPVADVVTTTTHKTLRGPRGGMILSKSEELGKKLNSAVFPGTQGGPLEHVIAGKAQAFYEDLQPAFKDYIGQVVKNAAAMAEVFNESETIRVVTGGTANHLLVLDLTKTGLTGKDAQALLDSVMITTNKEAIPNDQRSPFVTSGLRVGTPAITSRGFKEDDAKQVASLIIKALDNADDQTILAEVKEAVHALTQAHPVD.

120-122 (GHL) provides a ligand contact to (6S)-5,6,7,8-tetrahydrofolate. Residue Lys-225 is modified to N6-(pyridoxal phosphate)lysine. (6S)-5,6,7,8-tetrahydrofolate is bound by residues Glu-241 and 350–352 (SPF).

It belongs to the SHMT family. In terms of assembly, homodimer. It depends on pyridoxal 5'-phosphate as a cofactor.

The protein localises to the cytoplasm. The catalysed reaction is (6R)-5,10-methylene-5,6,7,8-tetrahydrofolate + glycine + H2O = (6S)-5,6,7,8-tetrahydrofolate + L-serine. It participates in one-carbon metabolism; tetrahydrofolate interconversion. The protein operates within amino-acid biosynthesis; glycine biosynthesis; glycine from L-serine: step 1/1. In terms of biological role, catalyzes the reversible interconversion of serine and glycine with tetrahydrofolate (THF) serving as the one-carbon carrier. This reaction serves as the major source of one-carbon groups required for the biosynthesis of purines, thymidylate, methionine, and other important biomolecules. Also exhibits THF-independent aldolase activity toward beta-hydroxyamino acids, producing glycine and aldehydes, via a retro-aldol mechanism. The chain is Serine hydroxymethyltransferase from Limosilactobacillus fermentum (strain NBRC 3956 / LMG 18251) (Lactobacillus fermentum).